Here is a 232-residue protein sequence, read N- to C-terminus: tRNA pseudouridine synthase B (232 aa).

The active-site Nucleophile is D53.

This sequence belongs to the pseudouridine synthase TruB family. Type 1 subfamily.

The enzyme catalyses uridine(55) in tRNA = pseudouridine(55) in tRNA. Functionally, responsible for synthesis of pseudouridine from uracil-55 in the psi GC loop of transfer RNAs. This chain is tRNA pseudouridine synthase B, found in Malacoplasma penetrans (strain HF-2) (Mycoplasma penetrans).